We begin with the raw amino-acid sequence, 122 residues long: MADDSNDTATDVEPDYRFTLANERTFLAWQRTALGLLAAAVALVQLVPELTIPGARQVLGVVLAILAILTSGMGLLRWQQADRAMRRHLPLPRHPTPGYLAVGLCVVGVVALALVVAKAITG.

3 helical membrane passes run 33–53, 58–78, and 97–117; these read ALGL…LTIP, VLGV…LLRW, and PGYL…LVVA.

This sequence to E.coli YidH.

The protein resides in the cell membrane. This is an uncharacterized protein from Mycobacterium tuberculosis (strain CDC 1551 / Oshkosh).